Consider the following 521-residue polypeptide: Transcription activator of gluconeogenesis SS1G_02293 (521 aa).

Residues 1–12 show a composition bias toward acidic residues; it reads MSGETEIDDPEV. Residues 1 to 75 are disordered; the sequence is MSGETEIDDP…KFDPKDPLRP (75 aa). Composition is skewed to basic and acidic residues over residues 21–49 and 65–74; these read YSDH…RPDG and PKFDPKDPLR. The segment at residues 84–112 is a DNA-binding region (zn(2)-C6 fungal-type); it reads CFACQRAHLTCGDERPCQRCIKRGLADAC. Disordered regions lie at residues 273–308, 322–358, and 478–501; these read SGSA…NPPF, VAPP…RDPS, and NTGN…PRMR. Residues 275 to 287 are compositionally biased toward polar residues; the sequence is SAETPPQDSSAGM. Composition is skewed to low complexity over residues 297-308, 337-351, and 480-494; these read NNNPAFNNNPPF, KSGP…SALG, and GNSG…GRGS. One can recognise a PAS domain in the interval 426–497; it reads TLFEYEDFML…GSSGRGSFTT (72 aa).

This sequence belongs to the ERT1/acuK family.

The protein localises to the nucleus. Its function is as follows. Transcription factor which regulates nonfermentable carbon utilization. Activator of gluconeogenetic genes. In Sclerotinia sclerotiorum (strain ATCC 18683 / 1980 / Ss-1) (White mold), this protein is Transcription activator of gluconeogenesis SS1G_02293.